We begin with the raw amino-acid sequence, 565 residues long: Periplasmic trehalase (565 aa).

Positions 1–30 (MKSPAPSRPQKMALIPACIFLCFAALSVQA) are cleaved as a signal peptide. Residues Arg152, 159–160 (WD), Asn196, 205–207 (RSQ), 277–279 (RPE), and Gly310 each bind substrate. Active-site proton donor/acceptor residues include Asp312 and Glu496. Glu511 provides a ligand contact to substrate. A disordered region spans residues 539-565 (CDNVPATRPLSESTTQPLKQKEAEPTP).

The protein belongs to the glycosyl hydrolase 37 family. As to quaternary structure, monomer.

It localises to the periplasm. It carries out the reaction alpha,alpha-trehalose + H2O = alpha-D-glucose + beta-D-glucose. Its function is as follows. Provides the cells with the ability to utilize trehalose at high osmolarity by splitting it into glucose molecules that can subsequently be taken up by the phosphotransferase-mediated uptake system. This is Periplasmic trehalase from Escherichia coli O1:K1 / APEC.